Here is a 126-residue protein sequence, read N- to C-terminus: Large ribosomal subunit protein bL12 (126 aa).

Belongs to the bacterial ribosomal protein bL12 family. In terms of assembly, homodimer. Part of the ribosomal stalk of the 50S ribosomal subunit. Forms a multimeric L10(L12)X complex, where L10 forms an elongated spine to which 2 to 4 L12 dimers bind in a sequential fashion. Binds GTP-bound translation factors.

Forms part of the ribosomal stalk which helps the ribosome interact with GTP-bound translation factors. Is thus essential for accurate translation. The chain is Large ribosomal subunit protein bL12 from Rhizobium meliloti (strain 1021) (Ensifer meliloti).